A 439-amino-acid polypeptide reads, in one-letter code: tRNA modification GTPase MnmE (439 aa).

The (6S)-5-formyl-5,6,7,8-tetrahydrofolate site is built by Arg20, Glu78, and Lys116. In terms of domain architecture, TrmE-type G spans 211-364; it reads GIYVTILGEP…LLNLIKQKVE (154 aa). Residues 221–226, 240–246, and 265–268 contribute to the GTP site; these read NSGKST, SEYAGTT, and DTAG. Positions 225 and 246 each coordinate Mg(2+). Lys439 contributes to the (6S)-5-formyl-5,6,7,8-tetrahydrofolate binding site.

This sequence belongs to the TRAFAC class TrmE-Era-EngA-EngB-Septin-like GTPase superfamily. TrmE GTPase family. In terms of assembly, homodimer. Heterotetramer of two MnmE and two MnmG subunits. K(+) serves as cofactor.

It is found in the cytoplasm. Exhibits a very high intrinsic GTPase hydrolysis rate. Involved in the addition of a carboxymethylaminomethyl (cmnm) group at the wobble position (U34) of certain tRNAs, forming tRNA-cmnm(5)s(2)U34. This Ehrlichia chaffeensis (strain ATCC CRL-10679 / Arkansas) protein is tRNA modification GTPase MnmE.